The chain runs to 197 residues: Putative protein N5-glutamine methyltransferase MJ0928 (197 aa).

S-adenosyl-L-methionine is bound by residues 42–46, D64, and N105; that span reads GVGTG. Substrate is bound at residue 105–108; the sequence is NPPY.

It belongs to the eukaryotic/archaeal PrmC-related family.

It catalyses the reaction L-glutaminyl-[protein] + S-adenosyl-L-methionine = N(5)-methyl-L-glutaminyl-[protein] + S-adenosyl-L-homocysteine + H(+). Its function is as follows. Putative protein methyltransferase using S-adenosyl-L-methionine as the methyl donor. May methylate a Gln residue in target proteins. This chain is Putative protein N5-glutamine methyltransferase MJ0928, found in Methanocaldococcus jannaschii (strain ATCC 43067 / DSM 2661 / JAL-1 / JCM 10045 / NBRC 100440) (Methanococcus jannaschii).